Here is a 721-residue protein sequence, read N- to C-terminus: Peroxisomal fatty acid beta-oxidation multifunctional protein AIM1 (721 aa).

E116 (nucleophile) is an active-site residue. The active-site Proton acceptor is E136. The Microbody targeting signal signature appears at 719 to 721 (SKL).

The protein in the N-terminal section; belongs to the enoyl-CoA hydratase/isomerase family. In the central section; belongs to the 3-hydroxyacyl-CoA dehydrogenase family. Widely expressed.

Its subcellular location is the peroxisome. It carries out the reaction a (3S)-3-hydroxyacyl-CoA = a (2E)-enoyl-CoA + H2O. The catalysed reaction is a 4-saturated-(3S)-3-hydroxyacyl-CoA = a (3E)-enoyl-CoA + H2O. The enzyme catalyses (3S)-3-hydroxybutanoyl-CoA = (2E)-butenoyl-CoA + H2O. It catalyses the reaction (3S)-hydroxyoctanoyl-CoA = (2E)-octenoyl-CoA + H2O. It carries out the reaction (3S)-3-hydroxydodecanoyl-CoA = (2E)-dodecenoyl-CoA + H2O. The catalysed reaction is (3S)-hydroxytetradecanoyl-CoA = (2E)-tetradecenoyl-CoA + H2O. The enzyme catalyses (3S)-hydroxyhexanoyl-CoA = (2E)-hexenoyl-CoA + H2O. It catalyses the reaction a (3Z)-enoyl-CoA = a 4-saturated (2E)-enoyl-CoA. It carries out the reaction a (3E)-enoyl-CoA = a 4-saturated (2E)-enoyl-CoA. The catalysed reaction is (3S)-3-hydroxybutanoyl-CoA = (3R)-3-hydroxybutanoyl-CoA. The enzyme catalyses a (3S)-3-hydroxyacyl-CoA + NAD(+) = a 3-oxoacyl-CoA + NADH + H(+). It catalyses the reaction (3S)-3-hydroxybutanoyl-CoA + NAD(+) = acetoacetyl-CoA + NADH + H(+). It carries out the reaction (3S)-hydroxyhexanoyl-CoA + NAD(+) = 3-oxohexanoyl-CoA + NADH + H(+). The catalysed reaction is (3S)-hydroxyoctanoyl-CoA + NAD(+) = 3-oxooctanoyl-CoA + NADH + H(+). The enzyme catalyses (3S)-3-hydroxydodecanoyl-CoA + NAD(+) = 3-oxododecanoyl-CoA + NADH + H(+). It catalyses the reaction (3S)-hydroxytetradecanoyl-CoA + NAD(+) = 3-oxotetradecanoyl-CoA + NADH + H(+). Its pathway is lipid metabolism; fatty acid beta-oxidation. Involved in peroxisomal fatty acid beta-oxidation. Required for wound-induced jasmonate biosynthesis. Possesses enoyl-CoA hydratase activity against short chain substrates (C4-C6) and 3-hydroxyacyl-CoA dehydrogenase activity against chains of variable sizes (C6-C16). Possesses cinnamoyl-CoA hydratase activity and is involved in the peroxisomal beta-oxidation pathway for the biosynthesis of benzoic acid (BA). Required for the accumulation in seeds of benzoylated glucosinolates (BGs) and substituted hydroxybenzoylated choline esters, which are BA-containing secondary metabolites. Required for salicylic acid (SA) in seeds. This is Peroxisomal fatty acid beta-oxidation multifunctional protein AIM1 (AIM1) from Arabidopsis thaliana (Mouse-ear cress).